The primary structure comprises 336 residues: Ephrin-B2 (336 aa).

The signal sequence occupies residues 1-28 (MAMARSRRDSVWKYCWGLLMVLCRTAIS). The Extracellular portion of the chain corresponds to 29–232 (RSIVLEPIYW…LLGSEVALFA (204 aa)). Residues 31-167 (IVLEPIYWNS…TRAMKILMKV (137 aa)) enclose the Ephrin RBD domain. N-linked (GlcNAc...) asparagine glycosylation is present at N39. 2 disulfides stabilise this stretch: C65–C104 and C92–C156. A glycan (N-linked (GlcNAc...) asparagine) is linked at N142. A disordered region spans residues 170-216 (DASSAGSARNHGPTRRPELEAGTNGRSSTTSPFVKPNPGSSTDGNSA). Residues 193-216 (NGRSSTTSPFVKPNPGSSTDGNSA) are compositionally biased toward polar residues. The chain crosses the membrane as a helical span at residues 233–253 (GIASGCIIFIVIIITLVVLLL). The Cytoplasmic portion of the chain corresponds to 254–336 (KYRRRHRKHS…QSPANIYYKV (83 aa)). Residue S263 is modified to Phosphoserine. T277 bears the Phosphothreonine mark. R280 is subject to Omega-N-methylarginine. The PDZ-binding motif lies at 334 to 336 (YKV).

This sequence belongs to the ephrin family. As to quaternary structure, interacts with PDZRN3. Binds to the ephrin receptor EPHA3, EPHA4 and EPHB4. In terms of processing, inducible phosphorylation of tyrosine residues in the cytoplasmic domain. Expressed in inner and outer pillar cells of the organ of Corti (at protein level). Expressed on lateral floor plate cells, specifically on commissural axon segments that have passed through the floor plate. Expressed in cells of the retinal ganglion cell layer during retinal axon guidance to the optic disk. Expressed in myogenic progenitor cells.

The protein localises to the cell membrane. The protein resides in the cell junction. Its subcellular location is the adherens junction. Its function is as follows. Cell surface transmembrane ligand for Eph receptors, a family of receptor tyrosine kinases which are crucial for migration, repulsion and adhesion during neuronal, vascular and epithelial development. Binds promiscuously Eph receptors residing on adjacent cells, leading to contact-dependent bidirectional signaling into neighboring cells. The signaling pathway downstream of the receptor is referred to as forward signaling while the signaling pathway downstream of the ephrin ligand is referred to as reverse signaling. Binds to receptor tyrosine kinase including EPHA4, EPHA3 and EPHB4. Together with EPHB4 plays a central role in heart morphogenesis and angiogenesis through regulation of cell adhesion and cell migration. EPHB4-mediated forward signaling controls cellular repulsion and segregation from EFNB2-expressing cells. May play a role in constraining the orientation of longitudinally projecting axons. The chain is Ephrin-B2 (Efnb2) from Mus musculus (Mouse).